Reading from the N-terminus, the 412-residue chain is Argininosuccinate synthase (412 aa).

10 to 18 (AYSGGLDTS) is an ATP binding site. An L-citrulline-binding site is contributed by tyrosine 89. Residue glycine 119 coordinates ATP. L-aspartate-binding residues include threonine 121, asparagine 125, and aspartate 126. Residue asparagine 125 participates in L-citrulline binding. The L-citrulline site is built by arginine 129, serine 177, glutamate 261, and tyrosine 273.

This sequence belongs to the argininosuccinate synthase family. Type 1 subfamily. Homotetramer.

It localises to the cytoplasm. It catalyses the reaction L-citrulline + L-aspartate + ATP = 2-(N(omega)-L-arginino)succinate + AMP + diphosphate + H(+). It functions in the pathway amino-acid biosynthesis; L-arginine biosynthesis; L-arginine from L-ornithine and carbamoyl phosphate: step 2/3. This is Argininosuccinate synthase from Bifidobacterium longum (strain NCC 2705).